Consider the following 450-residue polypeptide: tRNA modification GTPase MnmE (450 aa).

The (6S)-5-formyl-5,6,7,8-tetrahydrofolate site is built by Arg-23, Glu-79, and Lys-118. Residues 214 to 374 enclose the TrmE-type G domain; it reads GITLILVGKP…LKEHILNKVG (161 aa). Asn-224 is a binding site for K(+). Residues 224–229, 243–249, and 268–271 contribute to the GTP site; these read NAGKSS, TSIAGTT, and DTAG. Ser-228 provides a ligand contact to Mg(2+). K(+) is bound by residues Thr-243, Ile-245, and Thr-248. Thr-249 contacts Mg(2+). Lys-450 is a binding site for (6S)-5-formyl-5,6,7,8-tetrahydrofolate.

It belongs to the TRAFAC class TrmE-Era-EngA-EngB-Septin-like GTPase superfamily. TrmE GTPase family. Homodimer. Heterotetramer of two MnmE and two MnmG subunits. It depends on K(+) as a cofactor.

It is found in the cytoplasm. Functionally, exhibits a very high intrinsic GTPase hydrolysis rate. Involved in the addition of a carboxymethylaminomethyl (cmnm) group at the wobble position (U34) of certain tRNAs, forming tRNA-cmnm(5)s(2)U34. This Francisella tularensis subsp. novicida (strain U112) protein is tRNA modification GTPase MnmE.